The chain runs to 309 residues: Porphobilinogen deaminase (309 aa).

C243 bears the S-(dipyrrolylmethanemethyl)cysteine mark.

It belongs to the HMBS family. As to quaternary structure, monomer. It depends on dipyrromethane as a cofactor.

It catalyses the reaction 4 porphobilinogen + H2O = hydroxymethylbilane + 4 NH4(+). It participates in porphyrin-containing compound metabolism; protoporphyrin-IX biosynthesis; coproporphyrinogen-III from 5-aminolevulinate: step 2/4. Functionally, tetrapolymerization of the monopyrrole PBG into the hydroxymethylbilane pre-uroporphyrinogen in several discrete steps. The chain is Porphobilinogen deaminase (hemC) from Deinococcus radiodurans (strain ATCC 13939 / DSM 20539 / JCM 16871 / CCUG 27074 / LMG 4051 / NBRC 15346 / NCIMB 9279 / VKM B-1422 / R1).